Here is a 209-residue protein sequence, read N- to C-terminus: Ribose 1,5-bisphosphate phosphokinase PhnN (209 aa).

An ATP-binding site is contributed by 27–34; sequence GPSGGGKD.

This sequence belongs to the ribose 1,5-bisphosphokinase family.

The enzyme catalyses alpha-D-ribose 1,5-bisphosphate + ATP = 5-phospho-alpha-D-ribose 1-diphosphate + ADP. It participates in metabolic intermediate biosynthesis; 5-phospho-alpha-D-ribose 1-diphosphate biosynthesis; 5-phospho-alpha-D-ribose 1-diphosphate from D-ribose 5-phosphate (route II): step 3/3. Its function is as follows. Catalyzes the phosphorylation of ribose 1,5-bisphosphate to 5-phospho-D-ribosyl alpha-1-diphosphate (PRPP). This Chelativorans sp. (strain BNC1) protein is Ribose 1,5-bisphosphate phosphokinase PhnN.